Consider the following 1465-residue polypeptide: DNA polymerase III PolC-type (1465 aa).

Residues Tyr-427 to Leu-583 form the Exonuclease domain.

This sequence belongs to the DNA polymerase type-C family. PolC subfamily.

It localises to the cytoplasm. It catalyses the reaction DNA(n) + a 2'-deoxyribonucleoside 5'-triphosphate = DNA(n+1) + diphosphate. In terms of biological role, required for replicative DNA synthesis. This DNA polymerase also exhibits 3' to 5' exonuclease activity. The sequence is that of DNA polymerase III PolC-type from Streptococcus pyogenes serotype M5 (strain Manfredo).